A 437-amino-acid chain; its full sequence is MEQFNAFKSLLKKHYEKTIGFHDKYIKDINRFVFKNNVLLILLENEFARNSLNDNSEIIHLAESLYEGIKSVNFVNEQDFFFNLAKLEENSRDTLYQNSGLSKNYTFQNFVISEGNKRAYEAGVRLAETQDNEFSPLFIYGETGLGKTHLLQAIGNEKFRNFPNARVKYVVSSDFAQEVVDAFYQRDKGIEKLKKNYENLDLVLIDDTQIFGRKEKTLEILFNIFNNLVLNKKQIVLVSDKAPDELIDIDARMISRFKSGLLLKIEKHNLSSLCEILTVKLKEKDPNIQITNEARHDAAQISGNDVRALNGIATKLLFFAKTSKQNLINTENLKEILFEEFEKFHKKSFDPYLLIENVCRRFNVPMDSVLSENRKAELVRVRDVCNYLLRQKYNMQFQQIGKIFKRSHSSVLMAVKRVAKMIENDSSLRDVITSLVI.

Residues 1–72 (MEQFNAFKSL…ESLYEGIKSV (72 aa)) form a domain I, interacts with DnaA modulators region. Residues 72-99 (VNFVNEQDFFFNLAKLEENSRDTLYQNS) form a domain II region. A domain III, AAA+ region region spans residues 100–320 (GLSKNYTFQN…GIATKLLFFA (221 aa)). ATP is bound by residues G144, G146, K147, and T148. The segment at 321–437 (KTSKQNLINT…LRDVITSLVI (117 aa)) is domain IV, binds dsDNA.

It belongs to the DnaA family. Oligomerizes as a right-handed, spiral filament on DNA at oriC.

It is found in the cytoplasm. In terms of biological role, plays an essential role in the initiation and regulation of chromosomal replication. ATP-DnaA binds to the origin of replication (oriC) to initiate formation of the DNA replication initiation complex once per cell cycle. Binds the DnaA box (a 9 base pair repeat at the origin) and separates the double-stranded (ds)DNA. Forms a right-handed helical filament on oriC DNA; dsDNA binds to the exterior of the filament while single-stranded (ss)DNA is stabiized in the filament's interior. The ATP-DnaA-oriC complex binds and stabilizes one strand of the AT-rich DNA unwinding element (DUE), permitting loading of DNA polymerase. After initiation quickly degrades to an ADP-DnaA complex that is not apt for DNA replication. Binds acidic phospholipids. This Mycoplasma genitalium (strain ATCC 33530 / DSM 19775 / NCTC 10195 / G37) (Mycoplasmoides genitalium) protein is Chromosomal replication initiator protein DnaA.